The sequence spans 61 residues: Hepcidin (61 aa).

Residues 1–24 (LQVLTEEVGSIDSPVGEHQQPGGE) form a disordered region. The propeptide occupies 1-34 (LQVLTEEVGSIDSPVGEHQQPGGESMRLPEHFRF). Cystine bridges form between Cys43-Cys59, Cys46-Cys49, Cys47-Xaa55, and Cys50-Cys58.

The protein belongs to the hepcidin family.

Its subcellular location is the secreted. Its function is as follows. Seems to act as a signaling molecule involved in the maintenance of iron homeostasis. Seems to be required in conjunction with HFE to regulate both intestinal iron absorption and iron storage in macrophages. May also have antimicrobial activity. The protein is Hepcidin (hamp) of Oncorhynchus mykiss (Rainbow trout).